We begin with the raw amino-acid sequence, 182 residues long: NAD(P)H-quinone oxidoreductase subunit I, chloroplastic (182 aa).

2 4Fe-4S ferredoxin-type domains span residues 52 to 81 (GRIH…VDWE) and 92 to 121 (KSYS…MTEE). The [4Fe-4S] cluster site is built by Cys-61, Cys-64, Cys-67, Cys-71, Cys-101, Cys-104, Cys-107, and Cys-111.

It belongs to the complex I 23 kDa subunit family. As to quaternary structure, NDH is composed of at least 16 different subunits, 5 of which are encoded in the nucleus. The cofactor is [4Fe-4S] cluster.

The protein localises to the plastid. It is found in the chloroplast thylakoid membrane. It catalyses the reaction a plastoquinone + NADH + (n+1) H(+)(in) = a plastoquinol + NAD(+) + n H(+)(out). The catalysed reaction is a plastoquinone + NADPH + (n+1) H(+)(in) = a plastoquinol + NADP(+) + n H(+)(out). In terms of biological role, NDH shuttles electrons from NAD(P)H:plastoquinone, via FMN and iron-sulfur (Fe-S) centers, to quinones in the photosynthetic chain and possibly in a chloroplast respiratory chain. The immediate electron acceptor for the enzyme in this species is believed to be plastoquinone. Couples the redox reaction to proton translocation, and thus conserves the redox energy in a proton gradient. The polypeptide is NAD(P)H-quinone oxidoreductase subunit I, chloroplastic (Chaetosphaeridium globosum (Charophycean green alga)).